We begin with the raw amino-acid sequence, 440 residues long: Cell division protein DivIB (440 aa).

The segment covering 1 to 10 (MMDDKTKNDQ) has biased composition (basic and acidic residues). 2 disordered regions span residues 1–97 (MMDD…DSNI) and 123–154 (QHQSAPNEQNSDSNDEETVTKKERKSKVTQLK). Topologically, residues 1-174 (MMDDKTKNDQ…RRKRQKRIQY (174 aa)) are cytoplasmic. Residues 12–21 (ESNEDKDELE) are compositionally biased toward acidic residues. The segment covering 27–39 (TSKKRRQRKRSKA) has biased composition (basic residues). A compositionally biased stretch (low complexity) spans 78-87 (DSASSHANDN). Positions 88-97 (NIDDSTDSNI) are enriched in acidic residues. Residues 124–134 (HQSAPNEQNSD) show a composition bias toward polar residues. A helical transmembrane segment spans residues 175 to 195 (SVITILVLLIAVILIYMFSPL). The POTRA domain maps to 196–264 (SKIAHVNING…NTLNVDITEN (69 aa)). Residues 196–440 (SKIAHVNING…KINKQSSKNN (245 aa)) are Extracellular-facing. The disordered stretch occupies residues 397-440 (YRGNTSTQSESDKNVTKSSQEENQAKEELQSVLNKINKQSSKNN). Over residues 406-425 (ESDKNVTKSSQEENQAKEEL) the composition is skewed to basic and acidic residues. Residues 427 to 440 (SVLNKINKQSSKNN) show a composition bias toward polar residues.

Belongs to the FtsQ/DivIB family. DivIB subfamily.

The protein localises to the cell membrane. Its function is as follows. Cell division protein that may be involved in stabilizing or promoting the assembly of the division complex. The protein is Cell division protein DivIB of Staphylococcus aureus (strain MRSA252).